The following is a 188-amino-acid chain: U1 small nuclear ribonucleoprotein C-2 (188 aa).

Residues tyrosine 4–aspartate 36 form a Matrin-type zinc finger. The disordered stretch occupies residues phenylalanine 57–glycine 188. A compositionally biased stretch (pro residues) spans glycine 72–proline 82. Residues alanine 109–glycine 124 show a composition bias toward low complexity. Residues serine 125–methionine 141 show a composition bias toward pro residues.

The protein belongs to the U1 small nuclear ribonucleoprotein C family. U1 snRNP is composed of the 7 core Sm proteins B/B', D1, D2, D3, E, F and G that assemble in a heptameric protein ring on the Sm site of the small nuclear RNA to form the core snRNP, and at least 3 U1 snRNP-specific proteins U1-70K, U1-A and U1-C. U1-C interacts with U1 snRNA and the 5' splice-site region of the pre-mRNA.

The protein localises to the nucleus. Component of the spliceosomal U1 snRNP, which is essential for recognition of the pre-mRNA 5' splice-site and the subsequent assembly of the spliceosome. U1-C is directly involved in initial 5' splice-site recognition for both constitutive and regulated alternative splicing. The interaction with the 5' splice-site seems to precede base-pairing between the pre-mRNA and the U1 snRNA. Stimulates commitment or early (E) complex formation by stabilizing the base pairing of the 5' end of the U1 snRNA and the 5' splice-site region. The sequence is that of U1 small nuclear ribonucleoprotein C-2 from Puccinia graminis f. sp. tritici (strain CRL 75-36-700-3 / race SCCL) (Black stem rust fungus).